Here is a 520-residue protein sequence, read N- to C-terminus: Nonsense-mediated mRNA decay factor SMG9 (520 aa).

Residues 1–143 are disordered; the sequence is MSESGHSQPG…KGEKEGQRPT (143 aa). An N-acetylserine modification is found at S2. S2, S4, S7, S32, and S53 each carry phosphoserine. Basic and acidic residues predominate over residues 36–53; it reads GRERDYIAPWERERRDGS. Pro residues-rich tracts occupy residues 78 to 94 and 122 to 133; these read QPPPSTAPAAPPAPAPL and TAPPPPTAPAPP. S451 is subject to Phosphoserine.

This sequence belongs to the SMG9 family. As to quaternary structure, self-associates to form homodimers and forms heterodimers with SMG8; these assembly forms may represent SMG1C intermediate forms. Component of the SMG1C complex composed of SMG1, SMG8 and SMG9. Interacts with DHX34; the interaction is RNA-independent. In terms of processing, phosphorylated by SMG1.

Involved in nonsense-mediated decay (NMD) of mRNAs containing premature stop codons. Is recruited by release factors to stalled ribosomes together with SMG1 and SMG8 (forming the SMG1C protein kinase complex) and, in the SMG1C complex, is required for the efficient association between SMG1 and SMG8. Plays a role in brain, heart, and eye development. The protein is Nonsense-mediated mRNA decay factor SMG9 of Mus musculus (Mouse).